The chain runs to 870 residues: Phenylalanine--tRNA ligase beta subunit (870 aa).

In terms of domain architecture, tRNA-binding spans 39–148; sequence AADLQKFEVA…EDAVVGEPFT (110 aa). Positions 427-551 constitute a B5 domain; that stretch reads PAKKTLDFPA…RIYGYDKIES (125 aa). The 49-residue stretch at 450–498 folds into the RPE1 insert domain; sequence LLHNEANKGEFVGNTEHSIAAYKEVREDASTGLTPKLPLEASYVKGLNI. The Mg(2+) site is built by Asp-529, Asp-535, Glu-538, and Glu-539. In terms of domain architecture, FDX-ACB spans 776 to 869; the sequence is SDYQANFRDY…IEQKFQGTLR (94 aa).

This sequence belongs to the phenylalanyl-tRNA synthetase beta subunit family. Type 1 subfamily. In terms of assembly, tetramer of two alpha and two beta subunits. The cofactor is Mg(2+).

It is found in the cytoplasm. It catalyses the reaction tRNA(Phe) + L-phenylalanine + ATP = L-phenylalanyl-tRNA(Phe) + AMP + diphosphate + H(+). The polypeptide is Phenylalanine--tRNA ligase beta subunit (pheT) (Rickettsia bellii (strain RML369-C)).